A 708-amino-acid chain; its full sequence is MDMEKTFNLTRRDDGIAILTMDVPGETMNTLRSEFGPEISDVLAEIKADTSIKGLVLVSGKKDSFVAGADISMLDACETATDAKQLSQQGHVVFNELESLPIPVVAAINGACLGGGLELALACHKRVCSLNPKTMMGVPEVQLGLLPGGGGTQRLPRLVGVTTALDMMLTGKQLRPKQALKMGLVDDAVPESILLRTAVEMALAGKRPAKKKHQSFFNKVLEGTSAGRNIIFDQAGKQVAKKTQGNYPAPAKIIDCVRQGMTKGMAKGLEVEASHFADLVMSKESGAMRSVFFATTEMKKETGAGDVEPQKVNKVMVLGGGLMGGGIASVTTTKAKIPARVKDISETGLSNALAYAYKLLDKGVKRRHMTPAVRDNLMALMTTTTEYKGIKDADIVVEAVFEDLALKHQMVKDVERECGEHTIFASNTSSLPIGQIAEAASRPENVIGLHYFSPVEKMPLVEVIAHEKTSAETIATTVAFAKKQGKTPIVVQDGAGFYVNRILALYMNEAAQLLLEGQSVEHLDKALIKFGFPVGPMTLLDEVGIDVGAKISPILEKELGERFKAPTAFDKLLADDRKGRKNGKGFYLYGGKKKAKEVDQTVYSVLGLKPGVDTEATEVAQRCVVQMLNEAVRCLEESIIACPRDGDIGAIFGIGFPPFLGGPFHYIDTLGAANLVKILENYQSRYGSRFEPAAKLKQMAEEGTRFFS.

The interval 1–190 is enoyl-CoA hydratase; sequence MDMEKTFNLT…KMGLVDDAVP (190 aa). The 3-hydroxyacyl-CoA dehydrogenase stretch occupies residues 310 to 708; it reads QKVNKVMVLG…MAEEGTRFFS (399 aa).

The protein in the N-terminal section; belongs to the enoyl-CoA hydratase/isomerase family. It in the central section; belongs to the 3-hydroxyacyl-CoA dehydrogenase family. As to quaternary structure, heterotetramer of two alpha chains (FadJ) and two beta chains (FadI).

Its subcellular location is the cytoplasm. It carries out the reaction a (3S)-3-hydroxyacyl-CoA = a (2E)-enoyl-CoA + H2O. It catalyses the reaction a 4-saturated-(3S)-3-hydroxyacyl-CoA = a (3E)-enoyl-CoA + H2O. The enzyme catalyses a (3S)-3-hydroxyacyl-CoA + NAD(+) = a 3-oxoacyl-CoA + NADH + H(+). The catalysed reaction is (3S)-3-hydroxybutanoyl-CoA = (3R)-3-hydroxybutanoyl-CoA. It functions in the pathway lipid metabolism; fatty acid beta-oxidation. Its function is as follows. Catalyzes the formation of a hydroxyacyl-CoA by addition of water on enoyl-CoA. Also exhibits 3-hydroxyacyl-CoA epimerase and 3-hydroxyacyl-CoA dehydrogenase activities. In Shewanella halifaxensis (strain HAW-EB4), this protein is Fatty acid oxidation complex subunit alpha.